The chain runs to 271 residues: Fork head domain-containing protein FD5 (271 aa).

Positions 12 to 103 (QKPPYSYISL…FDMFENGSLL (92 aa)) form a DNA-binding region, fork-head.

Expressed in early embryogenesis in 14 symmetrical pairs of segmentally arranged neuroblasts and in developing peripheral nervous system. Also, later in embryogenesis, in a cluster of cells in head region.

Its subcellular location is the nucleus. In terms of biological role, involved in development during embryogenesis. In Drosophila melanogaster (Fruit fly), this protein is Fork head domain-containing protein FD5 (fd96Cb).